The following is a 316-amino-acid chain: tRNA dimethylallyltransferase (316 aa).

17 to 24 contributes to the ATP binding site; that stretch reads GPTASGKT. 19–24 is a binding site for substrate; that stretch reads TASGKT. Interaction with substrate tRNA stretches follow at residues 42 to 45, 166 to 170, 247 to 252, and 280 to 287; these read DSAL, QRLSR, RCVGYR, and KRQITWLR.

The protein belongs to the IPP transferase family. Monomer. Mg(2+) serves as cofactor.

The enzyme catalyses adenosine(37) in tRNA + dimethylallyl diphosphate = N(6)-dimethylallyladenosine(37) in tRNA + diphosphate. In terms of biological role, catalyzes the transfer of a dimethylallyl group onto the adenine at position 37 in tRNAs that read codons beginning with uridine, leading to the formation of N6-(dimethylallyl)adenosine (i(6)A). This Escherichia coli O127:H6 (strain E2348/69 / EPEC) protein is tRNA dimethylallyltransferase.